The sequence spans 139 residues: MRQFEFFEHTADVGIKSYGRSLEEAFSNAALGVFEVITDTSKVRPVEYREIYLNGYDLENLLYKWIEELLYYYDSELMIFSKFDLMIDQDSITLEGKAWGERFNDKIHERRTVVKAMTYHQLSIEKTESGYVITFVVDI.

Residues aspartate 12, aspartate 138, and isoleucine 139 each coordinate Ca(2+).

This sequence belongs to the archease family.

Functionally, activates the tRNA-splicing ligase complex by facilitating the enzymatic turnover of catalytic subunit RtcB. Acts by promoting the guanylylation of RtcB, a key intermediate step in tRNA ligation. Can also alter the NTP specificity of RtcB such that ATP, dGTP or ITP is used efficiently. The polypeptide is Protein archease (Saccharolobus solfataricus (strain ATCC 35092 / DSM 1617 / JCM 11322 / P2) (Sulfolobus solfataricus)).